The following is a 256-amino-acid chain: Peroxisomal membrane protein PMP30A (256 aa).

The protein belongs to the peroxin-11 family.

It is found in the peroxisome membrane. Functionally, involved in peroxisomal proliferation. Could participate in peroxisomal elongation or fission. May be involved in parceling of peroxisomes into regular quanta. In Candida boidinii (Yeast), this protein is Peroxisomal membrane protein PMP30A (PEX11A).